Reading from the N-terminus, the 140-residue chain is Vesicle transport protein GOT1 (140 aa).

4 consecutive transmembrane segments (helical) span residues 12 to 32 (IGLG…IFVF), 35 to 55 (GLIA…IGIN), 71 to 91 (ISFG…GLLL), and 96 to 116 (FLVL…RIPL).

This sequence belongs to the GOT1 family. In terms of assembly, homodimer. No interactions with STL1, STL2, CESA1, CESA3, CESA4, CESA6, CESA7 or CESA8.

The protein localises to the golgi apparatus membrane. Its function is as follows. May be involved in fusion of ER-derived transport vesicles with the Golgi complex. This Arabidopsis thaliana (Mouse-ear cress) protein is Vesicle transport protein GOT1.